The primary structure comprises 496 residues: Glutamyl-tRNA(Gln) amidotransferase subunit A (496 aa).

Catalysis depends on charge relay system residues Lys75 and Ser150. The active-site Acyl-ester intermediate is the Ser174.

The protein belongs to the amidase family. GatA subfamily. Heterotrimer of A, B and C subunits.

The catalysed reaction is L-glutamyl-tRNA(Gln) + L-glutamine + ATP + H2O = L-glutaminyl-tRNA(Gln) + L-glutamate + ADP + phosphate + H(+). In terms of biological role, allows the formation of correctly charged Gln-tRNA(Gln) through the transamidation of misacylated Glu-tRNA(Gln) in organisms which lack glutaminyl-tRNA synthetase. The reaction takes place in the presence of glutamine and ATP through an activated gamma-phospho-Glu-tRNA(Gln). This Burkholderia thailandensis (strain ATCC 700388 / DSM 13276 / CCUG 48851 / CIP 106301 / E264) protein is Glutamyl-tRNA(Gln) amidotransferase subunit A.